The following is a 303-amino-acid chain: Putative fimbrium subunit Fim1C (303 aa).

A signal peptide spans 1-22 (MKKQALICALLATVLLPGCSED).

The protein belongs to the bacteroidetes fimbrillin superfamily. Mfa-like family. In terms of assembly, may be part of the fimbrial tip.

It localises to the fimbrium. Its function is as follows. Putative component of the fimbrium tip. Fimbriae are filamentous appendages on the cell surface that mediate cell adhesion and biofilm formation. The polypeptide is Putative fimbrium subunit Fim1C (fim1C) (Bacteroides uniformis (strain ATCC 8492 / DSM 6597 / CCUG 4942 / CIP 103695 / JCM 5828 / KCTC 5204 / NCTC 13054 / VPI 0061)).